A 313-amino-acid polypeptide reads, in one-letter code: Isoaspartyl peptidase (313 aa).

Catalysis depends on Thr179, which acts as the Nucleophile. Substrate contacts are provided by residues 207–210 and 230–233; these read RVGD and TGTG.

The protein belongs to the Ntn-hydrolase family. Heterotetramer of two alpha and two beta chains arranged as a dimer of alpha/beta heterodimers. Post-translationally, autocleaved. Generates the alpha and beta subunits. The beta subunit is thought to be responsible for the nucleophile hydrolase activity.

It carries out the reaction Cleavage of a beta-linked Asp residue from the N-terminus of a polypeptide.. Its function is as follows. Degrades proteins damaged by L-isoaspartyl residue formation (also known as beta-Asp residues). Degrades L-isoaspartyl-containing di- and tripeptides. Acts best on iso-Asp-Leu, followed by iso-Asp-Ala, -His and to a lesser extent iso-Asp-Lys, -Phe and iso-Asp-Leu-Ala. Does not act on internal iso-Asp bonds (Als-iso-Asp-Leu-Ala). Does not act on alpha-Asp bonds. Has poor L-asparaginase activity. The protein is Isoaspartyl peptidase (iaaA) of Salmonella typhimurium (strain LT2 / SGSC1412 / ATCC 700720).